The primary structure comprises 377 residues: Succinyl-diaminopimelate desuccinylase (377 aa).

His-67 provides a ligand contact to Zn(2+). Asp-69 is a catalytic residue. Asp-100 contacts Zn(2+). Glu-134 (proton acceptor) is an active-site residue. Residues Glu-135, Glu-163, and His-349 each coordinate Zn(2+).

The protein belongs to the peptidase M20A family. DapE subfamily. As to quaternary structure, homodimer. The cofactor is Zn(2+). Co(2+) serves as cofactor.

The enzyme catalyses N-succinyl-(2S,6S)-2,6-diaminopimelate + H2O = (2S,6S)-2,6-diaminopimelate + succinate. Its pathway is amino-acid biosynthesis; L-lysine biosynthesis via DAP pathway; LL-2,6-diaminopimelate from (S)-tetrahydrodipicolinate (succinylase route): step 3/3. Functionally, catalyzes the hydrolysis of N-succinyl-L,L-diaminopimelic acid (SDAP), forming succinate and LL-2,6-diaminopimelate (DAP), an intermediate involved in the bacterial biosynthesis of lysine and meso-diaminopimelic acid, an essential component of bacterial cell walls. The protein is Succinyl-diaminopimelate desuccinylase of Buchnera aphidicola subsp. Baizongia pistaciae (strain Bp).